Here is a 246-residue protein sequence, read N- to C-terminus: Probable transcriptional regulatory protein CLJ_B3338 (246 aa).

It belongs to the TACO1 family.

It is found in the cytoplasm. The polypeptide is Probable transcriptional regulatory protein CLJ_B3338 (Clostridium botulinum (strain 657 / Type Ba4)).